The chain runs to 340 residues: MQSIPIKHVGADNVSQLIDRFERQYVYLRLSVTDVCNFRCNYCLPDGYKPPSHRQQFLSISEIQRVVRAFADLGTEKVRITGGEPTLRKDFLEIAHTVSQTNGIKKVALTTNGYRMERDIDLWQQAGITDINVSVDSLDTRQFQLITGENKLQSILKGIDRAFEIGYRKIKVNAVLMKQYTAPELDKFLAWIKDKPIQMRFIELMETGEMDSFFKAQHLSGQSVMQRLLQEGWQLQPKALSDGPAKVLSHPDYQGEIGLIMPYEKNFCASCNRLRVSALGKLHLCLFGEEGIDLRDLLSEDTQQAQLKARLKAALQGKREHHYLHIGDSGIRNNLASIGG.

Positions 20–246 constitute a Radical SAM core domain; it reads RFERQYVYLR…PKALSDGPAK (227 aa). R29 lines the GTP pocket. C36 and C40 together coordinate [4Fe-4S] cluster. Y42 provides a ligand contact to S-adenosyl-L-methionine. C43 is a binding site for [4Fe-4S] cluster. Residue R79 participates in GTP binding. Residue G83 coordinates S-adenosyl-L-methionine. A GTP-binding site is contributed by T110. S134 provides a ligand contact to S-adenosyl-L-methionine. K171 contacts GTP. M205 provides a ligand contact to S-adenosyl-L-methionine. 2 residues coordinate [4Fe-4S] cluster: C268 and C271. 273–275 lines the GTP pocket; it reads RLR. C285 provides a ligand contact to [4Fe-4S] cluster.

This sequence belongs to the radical SAM superfamily. MoaA family. Monomer and homodimer. It depends on [4Fe-4S] cluster as a cofactor.

It carries out the reaction GTP + AH2 + S-adenosyl-L-methionine = (8S)-3',8-cyclo-7,8-dihydroguanosine 5'-triphosphate + 5'-deoxyadenosine + L-methionine + A + H(+). The protein operates within cofactor biosynthesis; molybdopterin biosynthesis. Functionally, catalyzes the cyclization of GTP to (8S)-3',8-cyclo-7,8-dihydroguanosine 5'-triphosphate. The polypeptide is GTP 3',8-cyclase (Actinobacillus pleuropneumoniae serotype 5b (strain L20)).